The sequence spans 568 residues: Sulfite reductase [NADPH] hemoprotein beta-component (568 aa).

Positions 425, 431, 470, and 474 each coordinate [4Fe-4S] cluster. Cys-474 is a binding site for siroheme.

The protein belongs to the nitrite and sulfite reductase 4Fe-4S domain family. In terms of assembly, alpha(8)-beta(8). The alpha component is a flavoprotein, the beta component is a hemoprotein. It depends on siroheme as a cofactor. [4Fe-4S] cluster is required as a cofactor.

It carries out the reaction hydrogen sulfide + 3 NADP(+) + 3 H2O = sulfite + 3 NADPH + 4 H(+). Its pathway is sulfur metabolism; hydrogen sulfide biosynthesis; hydrogen sulfide from sulfite (NADPH route): step 1/1. Its function is as follows. Component of the sulfite reductase complex that catalyzes the 6-electron reduction of sulfite to sulfide. This is one of several activities required for the biosynthesis of L-cysteine from sulfate. The polypeptide is Sulfite reductase [NADPH] hemoprotein beta-component (Xanthomonas campestris pv. campestris (strain ATCC 33913 / DSM 3586 / NCPPB 528 / LMG 568 / P 25)).